Consider the following 603-residue polypeptide: DNA mismatch repair protein MutL (603 aa).

Belongs to the DNA mismatch repair MutL/HexB family.

Its function is as follows. This protein is involved in the repair of mismatches in DNA. It is required for dam-dependent methyl-directed DNA mismatch repair. May act as a 'molecular matchmaker', a protein that promotes the formation of a stable complex between two or more DNA-binding proteins in an ATP-dependent manner without itself being part of a final effector complex. This is DNA mismatch repair protein MutL from Sphingopyxis alaskensis (strain DSM 13593 / LMG 18877 / RB2256) (Sphingomonas alaskensis).